The sequence spans 407 residues: Imidazolonepropionase (407 aa).

Residues histidine 74 and histidine 76 each contribute to the Fe(3+) site. Positions 74 and 76 each coordinate Zn(2+). 4-imidazolone-5-propanoate contacts are provided by arginine 83, tyrosine 146, and histidine 179. Residue tyrosine 146 participates in N-formimidoyl-L-glutamate binding. Histidine 244 is a binding site for Fe(3+). Position 244 (histidine 244) interacts with Zn(2+). Position 247 (glutamine 247) interacts with 4-imidazolone-5-propanoate. Aspartate 319 contributes to the Fe(3+) binding site. Position 319 (aspartate 319) interacts with Zn(2+). 2 residues coordinate N-formimidoyl-L-glutamate: asparagine 321 and glycine 323. A 4-imidazolone-5-propanoate-binding site is contributed by threonine 324.

This sequence belongs to the metallo-dependent hydrolases superfamily. HutI family. It depends on Zn(2+) as a cofactor. Fe(3+) is required as a cofactor.

It localises to the cytoplasm. The enzyme catalyses 4-imidazolone-5-propanoate + H2O = N-formimidoyl-L-glutamate. It participates in amino-acid degradation; L-histidine degradation into L-glutamate; N-formimidoyl-L-glutamate from L-histidine: step 3/3. In terms of biological role, catalyzes the hydrolytic cleavage of the carbon-nitrogen bond in imidazolone-5-propanoate to yield N-formimidoyl-L-glutamate. It is the third step in the universal histidine degradation pathway. This Salmonella paratyphi C (strain RKS4594) protein is Imidazolonepropionase.